A 325-amino-acid polypeptide reads, in one-letter code: Protein TMED8 (325 aa).

The tract at residues 1–78 (MSDLQAAEGP…MVSPVSKDAT (78 aa)) is disordered. One can recognise a GOLD domain in the interval 159–323 (PPCIWTFAKV…NKTLYFHIYY (165 aa)). An N6-acetyllysine modification is found at K169. The disordered stretch occupies residues 232–267 (TVQVSDSSDDEDEEEEEEEEIEEPVPAGDVERGSRS). Positions 238–254 (SSDDEDEEEEEEEEIEE) are enriched in acidic residues.

This is Protein TMED8 (TMED8) from Homo sapiens (Human).